The following is a 106-amino-acid chain: Movement protein TGB2 (106 aa).

Residues 1 to 9 lie on the Cytoplasmic side of the membrane; the sequence is MPLTPPPDH. The helical transmembrane segment at 10 to 30 threads the bilayer; the sequence is TKVLLVAAIGLSIVASILTYS. At 31 to 71 the chain is on the lumenal side; the sequence is RNTLPQVGDHSHLLPHGGVYKDGTKTIVYGGPRKLNSLEGG. A helical membrane pass occupies residues 72–92; that stretch reads FNLPVQPWFLVILLSAAIFLL. The Cytoplasmic portion of the chain corresponds to 93 to 106; it reads SCRSGHRRVCGQCH.

Belongs to the Tymovirales TGBp2 protein family.

The protein localises to the host endoplasmic reticulum membrane. Functionally, plays a role in viral cell-to-cell propagation, by facilitating genome transport to neighboring plant cells through plasmosdesmata,. This Chrysanthemum morifolium (Florist's daisy) protein is Movement protein TGB2.